The primary structure comprises 168 residues: Calcium-binding protein 2 (168 aa).

EF-hand domains are found at residues 13 to 48 (GMEKDLESLFKKYDSDRNGKITYIEIVETLRKAGKK), 48 to 83 (KNPERIADLLFRDDTDKNGELTIEEAKLRIVRMNDE), 88 to 123 (VLNWDVEKFINDNDKDGDRKITRDEVLQRFTEQGAE), and 124 to 159 (DPELITDSIFRQMDLDRDGVITCDEIKEFNRKKKFS). The Ca(2+) site is built by Asp26, Asp28, Asn30, Lys32, Glu37, Asp61, Asp63, Asn65, Glu67, Glu72, Asp101, Asp103, Asp105, Lys107, Glu112, Asp137, Asp139, Asp141, and Glu148.

Its function is as follows. Not known; probably binds four calcium ions. The polypeptide is Calcium-binding protein 2 (cbp2) (Dictyostelium discoideum (Social amoeba)).